The following is a 949-amino-acid chain: Serine/threonine-protein kinase KIPK2 (949 aa).

4 disordered regions span residues 79–116, 323–344, 407–426, and 495–525; these read LETSASAGTSRSTSPSNKGAMKKPFPMGTPRSPRVGPS, TALSSGLKGKLDNFPGSGTEKS, STSTENHPPSNTSHTTDKNV, and SSEKFDFSLSSKNSLGDYSSSTSMSEESNLS. Low complexity predominate over residues 81–94; sequence TSASAGTSRSTSPS. Composition is skewed to polar residues over residues 407–420 and 495–512; these read STSTENHPPSNTSH and SSEKFDFSLSSKNSLGDY. Positions 513-525 are enriched in low complexity; that stretch reads SSSTSMSEESNLS. Residues 559–898 enclose the Protein kinase domain; it reads FNLLKKLGCG…AAEIKRHPFF (340 aa). Residues 565 to 573 and Lys588 contribute to the ATP site; that span reads LGCGDIGTV. The Proton acceptor role is filled by Asp684.

This sequence belongs to the protein kinase superfamily. Ser/Thr protein kinase family. Interacts with KCBP, PERK8, PERK9, PERK10 and PERK13.

The enzyme catalyses L-seryl-[protein] + ATP = O-phospho-L-seryl-[protein] + ADP + H(+). It carries out the reaction L-threonyl-[protein] + ATP = O-phospho-L-threonyl-[protein] + ADP + H(+). Its function is as follows. Serine/threonine-protein kinase that could be involved in the negative regulation of root growth. This chain is Serine/threonine-protein kinase KIPK2, found in Arabidopsis thaliana (Mouse-ear cress).